Reading from the N-terminus, the 87-residue chain is Retinal rod rhodopsin-sensitive cGMP 3',5'-cyclic phosphodiesterase subunit gamma (87 aa).

Methionine 1 carries the post-translational modification N-acetylmethionine. Positions 1–12 (MNLEPPKAEIRS) are enriched in basic and acidic residues. The tract at residues 1–55 (MNLEPPKAEIRSATRVMGGPVTPRKGPPKFKQRQTRQFKSKPPKKGVQGFGDDIP) is disordered. The segment covering 26–44 (GPPKFKQRQTRQFKSKPPK) has biased composition (basic residues).

The protein belongs to the rod/cone cGMP-PDE gamma subunit family. Oligomer composed of two catalytic chains (alpha and beta), an inhibitory chain (gamma) and the delta chain.

It catalyses the reaction 3',5'-cyclic GMP + H2O = GMP + H(+). Its function is as follows. Participates in processes of transmission and amplification of the visual signal. cGMP-PDEs are the effector molecules in G-protein-mediated phototransduction in vertebrate rods and cones. In Bos taurus (Bovine), this protein is Retinal rod rhodopsin-sensitive cGMP 3',5'-cyclic phosphodiesterase subunit gamma (PDE6G).